We begin with the raw amino-acid sequence, 485 residues long: Glutamyl-tRNA(Gln) amidotransferase subunit A (485 aa).

Catalysis depends on charge relay system residues lysine 79 and serine 154. The active-site Acyl-ester intermediate is serine 178.

It belongs to the amidase family. GatA subfamily. Heterotrimer of A, B and C subunits.

The catalysed reaction is L-glutamyl-tRNA(Gln) + L-glutamine + ATP + H2O = L-glutaminyl-tRNA(Gln) + L-glutamate + ADP + phosphate + H(+). Functionally, allows the formation of correctly charged Gln-tRNA(Gln) through the transamidation of misacylated Glu-tRNA(Gln) in organisms which lack glutaminyl-tRNA synthetase. The reaction takes place in the presence of glutamine and ATP through an activated gamma-phospho-Glu-tRNA(Gln). The protein is Glutamyl-tRNA(Gln) amidotransferase subunit A of Persephonella marina (strain DSM 14350 / EX-H1).